The sequence spans 195 residues: ATP-dependent Clp protease proteolytic subunit (195 aa).

Ser-98 functions as the Nucleophile in the catalytic mechanism. His-123 is a catalytic residue.

It belongs to the peptidase S14 family. In terms of assembly, fourteen ClpP subunits assemble into 2 heptameric rings which stack back to back to give a disk-like structure with a central cavity, resembling the structure of eukaryotic proteasomes.

It is found in the cytoplasm. It catalyses the reaction Hydrolysis of proteins to small peptides in the presence of ATP and magnesium. alpha-casein is the usual test substrate. In the absence of ATP, only oligopeptides shorter than five residues are hydrolyzed (such as succinyl-Leu-Tyr-|-NHMec, and Leu-Tyr-Leu-|-Tyr-Trp, in which cleavage of the -Tyr-|-Leu- and -Tyr-|-Trp bonds also occurs).. Its function is as follows. Cleaves peptides in various proteins in a process that requires ATP hydrolysis. Has a chymotrypsin-like activity. Plays a major role in the degradation of misfolded proteins. In Thermodesulfovibrio yellowstonii (strain ATCC 51303 / DSM 11347 / YP87), this protein is ATP-dependent Clp protease proteolytic subunit.